We begin with the raw amino-acid sequence, 163 residues long: Crossover junction endodeoxyribonuclease RuvC (163 aa).

Active-site residues include D4, E65, and D138. 3 residues coordinate Mg(2+): D4, E65, and D138.

It belongs to the RuvC family. Homodimer which binds Holliday junction (HJ) DNA. The HJ becomes 2-fold symmetrical on binding to RuvC with unstacked arms; it has a different conformation from HJ DNA in complex with RuvA. In the full resolvosome a probable DNA-RuvA(4)-RuvB(12)-RuvC(2) complex forms which resolves the HJ. Mg(2+) is required as a cofactor.

Its subcellular location is the cytoplasm. The catalysed reaction is Endonucleolytic cleavage at a junction such as a reciprocal single-stranded crossover between two homologous DNA duplexes (Holliday junction).. Functionally, the RuvA-RuvB-RuvC complex processes Holliday junction (HJ) DNA during genetic recombination and DNA repair. Endonuclease that resolves HJ intermediates. Cleaves cruciform DNA by making single-stranded nicks across the HJ at symmetrical positions within the homologous arms, yielding a 5'-phosphate and a 3'-hydroxyl group; requires a central core of homology in the junction. The consensus cleavage sequence is 5'-(A/T)TT(C/G)-3'. Cleavage occurs on the 3'-side of the TT dinucleotide at the point of strand exchange. HJ branch migration catalyzed by RuvA-RuvB allows RuvC to scan DNA until it finds its consensus sequence, where it cleaves and resolves the cruciform DNA. The sequence is that of Crossover junction endodeoxyribonuclease RuvC from Corynebacterium diphtheriae (strain ATCC 700971 / NCTC 13129 / Biotype gravis).